We begin with the raw amino-acid sequence, 155 residues long: Ribosome maturation factor RimP (155 aa).

It belongs to the RimP family.

It is found in the cytoplasm. Required for maturation of 30S ribosomal subunits. The polypeptide is Ribosome maturation factor RimP (Bacteroides fragilis (strain ATCC 25285 / DSM 2151 / CCUG 4856 / JCM 11019 / LMG 10263 / NCTC 9343 / Onslow / VPI 2553 / EN-2)).